A 190-amino-acid chain; its full sequence is Xanthine phosphoribosyltransferase (190 aa).

Positions 20 and 27 each coordinate xanthine. Position 128 to 132 (128 to 132) interacts with 5-phospho-alpha-D-ribose 1-diphosphate; sequence ANGKA. Lysine 156 serves as a coordination point for xanthine.

It belongs to the purine/pyrimidine phosphoribosyltransferase family. Xpt subfamily. As to quaternary structure, homodimer.

It localises to the cytoplasm. The catalysed reaction is XMP + diphosphate = xanthine + 5-phospho-alpha-D-ribose 1-diphosphate. Its pathway is purine metabolism; XMP biosynthesis via salvage pathway; XMP from xanthine: step 1/1. In terms of biological role, converts the preformed base xanthine, a product of nucleic acid breakdown, to xanthosine 5'-monophosphate (XMP), so it can be reused for RNA or DNA synthesis. The protein is Xanthine phosphoribosyltransferase of Pseudomonas fluorescens (strain Pf0-1).